A 151-amino-acid chain; its full sequence is 3-dehydroquinate dehydratase (151 aa).

The active-site Proton acceptor is Y24. N76, H82, and D89 together coordinate substrate. H102 serves as the catalytic Proton donor. Residues 103–104 (LS) and R113 each bind substrate.

It belongs to the type-II 3-dehydroquinase family. Homododecamer.

It carries out the reaction 3-dehydroquinate = 3-dehydroshikimate + H2O. Its pathway is metabolic intermediate biosynthesis; chorismate biosynthesis; chorismate from D-erythrose 4-phosphate and phosphoenolpyruvate: step 3/7. Catalyzes a trans-dehydration via an enolate intermediate. The sequence is that of 3-dehydroquinate dehydratase from Acinetobacter baumannii (strain AB307-0294).